The chain runs to 372 residues: Aminomethyltransferase (372 aa).

The protein belongs to the GcvT family. The glycine cleavage system is composed of four proteins: P, T, L and H.

It carries out the reaction N(6)-[(R)-S(8)-aminomethyldihydrolipoyl]-L-lysyl-[protein] + (6S)-5,6,7,8-tetrahydrofolate = N(6)-[(R)-dihydrolipoyl]-L-lysyl-[protein] + (6R)-5,10-methylene-5,6,7,8-tetrahydrofolate + NH4(+). In terms of biological role, the glycine cleavage system catalyzes the degradation of glycine. The sequence is that of Aminomethyltransferase from Streptomyces avermitilis (strain ATCC 31267 / DSM 46492 / JCM 5070 / NBRC 14893 / NCIMB 12804 / NRRL 8165 / MA-4680).